A 301-amino-acid polypeptide reads, in one-letter code: UDP-N-acetylenolpyruvoylglucosamine reductase (301 aa).

One can recognise an FAD-binding PCMH-type domain in the interval 30–194; it reads VGGEPDYLVF…LSAKFALAPG (165 aa). Arg173 is an active-site residue. Ser223 (proton donor) is an active-site residue. The active site involves Glu293.

This sequence belongs to the MurB family. FAD serves as cofactor.

It is found in the cytoplasm. It catalyses the reaction UDP-N-acetyl-alpha-D-muramate + NADP(+) = UDP-N-acetyl-3-O-(1-carboxyvinyl)-alpha-D-glucosamine + NADPH + H(+). It participates in cell wall biogenesis; peptidoglycan biosynthesis. In terms of biological role, cell wall formation. The polypeptide is UDP-N-acetylenolpyruvoylglucosamine reductase (Streptococcus pneumoniae (strain CGSP14)).